The sequence spans 536 residues: CTP synthase (536 aa).

Residues 1-267 form an amidoligase domain region; sequence MSKFVFVTGG…CKETLKYLDL (267 aa). S13 is a CTP binding site. S13 is a UTP binding site. ATP is bound by residues 14-19 and D71; that span reads SIGKGI. Residues D71 and E141 each contribute to the Mg(2+) site. Residues 148-150, 188-193, and K224 contribute to the CTP site; these read DIE and KTKPTQ. Residues 188–193 and K224 each bind UTP; that span reads KTKPTQ. The Glutamine amidotransferase type-1 domain occupies 292-534; sequence KVALVGKYIE…IKASQDKLTQ (243 aa). Residue G354 coordinates L-glutamine. C381 serves as the catalytic Nucleophile; for glutamine hydrolysis. Residues 382-385, E405, and R462 contribute to the L-glutamine site; that span reads LGMQ. Residues H507 and E509 contribute to the active site.

This sequence belongs to the CTP synthase family. Homotetramer.

It catalyses the reaction UTP + L-glutamine + ATP + H2O = CTP + L-glutamate + ADP + phosphate + 2 H(+). It carries out the reaction L-glutamine + H2O = L-glutamate + NH4(+). The catalysed reaction is UTP + NH4(+) + ATP = CTP + ADP + phosphate + 2 H(+). It participates in pyrimidine metabolism; CTP biosynthesis via de novo pathway; CTP from UDP: step 2/2. With respect to regulation, allosterically activated by GTP, when glutamine is the substrate; GTP has no effect on the reaction when ammonia is the substrate. The allosteric effector GTP functions by stabilizing the protein conformation that binds the tetrahedral intermediate(s) formed during glutamine hydrolysis. Inhibited by the product CTP, via allosteric rather than competitive inhibition. Functionally, catalyzes the ATP-dependent amination of UTP to CTP with either L-glutamine or ammonia as the source of nitrogen. Regulates intracellular CTP levels through interactions with the four ribonucleotide triphosphates. This Prochlorococcus marinus (strain AS9601) protein is CTP synthase.